The following is a 239-amino-acid chain: MAGHSKWANIQHRKGRQDEKRGRIWTRIMREITVAARAGGGDLSANPRLRLALDKARAANMPAERIKYNIDKATGNAEGQSYEEIRYEGYGIGGAAIIVDTMTDNRLRTVAEVRHAFSKHGANMGTEGSVVFQFKHCGQLVYAPGSSEDQVMEVALQAGAEDVIMGEDGAIEVLTLPADFEAVKNALQAAGLRPELAEVTMRAENTIELQGEDAARMQKLLDALEDLDDTQAVYHNATL.

The segment at 1–22 (MAGHSKWANIQHRKGRQDEKRG) is disordered.

Belongs to the TACO1 family.

The protein resides in the cytoplasm. The protein is Probable transcriptional regulatory protein Veis_4238 of Verminephrobacter eiseniae (strain EF01-2).